A 261-amino-acid polypeptide reads, in one-letter code: Thiazole synthase (261 aa).

Lysine 102 serves as the catalytic Schiff-base intermediate with DXP. 1-deoxy-D-xylulose 5-phosphate is bound by residues glycine 163, 189 to 190, and 211 to 212; these read AG and NT.

The protein belongs to the ThiG family. Homotetramer. Forms heterodimers with either ThiH or ThiS.

The protein localises to the cytoplasm. The catalysed reaction is [ThiS sulfur-carrier protein]-C-terminal-Gly-aminoethanethioate + 2-iminoacetate + 1-deoxy-D-xylulose 5-phosphate = [ThiS sulfur-carrier protein]-C-terminal Gly-Gly + 2-[(2R,5Z)-2-carboxy-4-methylthiazol-5(2H)-ylidene]ethyl phosphate + 2 H2O + H(+). Its pathway is cofactor biosynthesis; thiamine diphosphate biosynthesis. Catalyzes the rearrangement of 1-deoxy-D-xylulose 5-phosphate (DXP) to produce the thiazole phosphate moiety of thiamine. Sulfur is provided by the thiocarboxylate moiety of the carrier protein ThiS. In vitro, sulfur can be provided by H(2)S. This Acinetobacter baumannii (strain SDF) protein is Thiazole synthase.